We begin with the raw amino-acid sequence, 644 residues long: Chaperone protein DnaK (644 aa).

Thr-199 carries the phosphothreonine; by autocatalysis modification. The segment at 605-644 is disordered; the sequence is KKSSEGQAAQGQTQSQESTKPVEEGVVDAEFEEVKEEDKK. The segment covering 609 to 623 has biased composition (polar residues); it reads EGQAAQGQTQSQEST. The segment covering 629-644 has biased composition (acidic residues); sequence GVVDAEFEEVKEEDKK.

It belongs to the heat shock protein 70 family.

Functionally, acts as a chaperone. In Legionella pneumophila (strain Paris), this protein is Chaperone protein DnaK.